We begin with the raw amino-acid sequence, 501 residues long: MIGSLRNKFEHFKVSEKGGQNLSTTLPKLPPAKDLDRSTIYKYRYNYGVNLGALFVLEPWIFSKETICTIDGKEYDSEFDAISQQLKKHSSEDVAKMLSDHYKKYIDRIDWEWLSKDAHITALRIPIGYWHVEDGKHLDSLPFAPLRKVYELAKPWEKLGELINNAKKMSIGVLIDLHGLPGGANCDSHSGSKSGEAAFFHKEKYMTKVYKDILPAIINTMTLGNENIIGIQVVNEACFDNNPKGQKFYYSEAINTVEKLQPGLPVIISDGWWPQQWADWVKEKHFSEIVVIDSHVYRCFSDSDKSKDANSIIKDLPNTVNFPHEDADYTVGEFSGVLDGQTWNKTSGDRDAIVQKYVQTQADVFSHVASWGWFFWTLQFEYGDGGEWGLAPMMQKGNLPKRPHGDDLQVDKKKIDSIIHEHEAYWNGKGKNFEHWRFEDGIKTAVDDIIAFRKFDNSLIGRWHSWKSQRRAEYVSAKKDSEFMWEWDQGYQRGLDEFNKY.

Catalysis depends on E236, which acts as the Proton donor. The active-site Nucleophile is the E333.

Belongs to the glycosyl hydrolase 5 (cellulase A) family.

The protein resides in the mitochondrion intermembrane space. This is an uncharacterized protein from Saccharomyces cerevisiae (strain ATCC 204508 / S288c) (Baker's yeast).